A 416-amino-acid chain; its full sequence is Serine protease hepsin (416 aa).

Residues 1-18 (MAKEGGRTAPCCSRPKVA) are Cytoplasmic-facing. The chain crosses the membrane as a helical; Signal-anchor for type II membrane protein span at residues 19 to 39 (ALTVGTLLFLTGIGAASWAIV). Residues 40 to 416 (TILLRSDQEP…SEATGMVTQP (377 aa)) lie on the Extracellular side of the membrane. Residues 53 to 150 (VQLSPGDSRL…RGRFLTATCQ (98 aa)) enclose the SRCR domain. Intrachain disulfides connect Cys76–Cys139, Cys89–Cys149, Cys118–Cys137, Cys152–Cys276, Cys187–Cys203, Cys290–Cys358, Cys321–Cys337, and Cys348–Cys380. Asn111 is a glycosylation site (N-linked (GlcNAc...) asparagine). Positions 162-404 (IVGGQDSSLG…FREWIFQAIK (243 aa)) constitute a Peptidase S1 domain. Catalysis depends on charge relay system residues His202 and Asp256. Ser352 functions as the Charge relay system in the catalytic mechanism.

Belongs to the peptidase S1 family. As to expression, widely expressed. Present in brain, heart, kidney, liver, stomach, muscle, lung, testis, skin and eye. Not expressed in ovary and thynus. In inner ear tissues, expressed in stria vascularis, modiolus, organ of Corti and spiral ganglion.

It is found in the cell membrane. It localises to the apical cell membrane. The enzyme catalyses Cleavage after basic amino-acid residues, with Arg strongly preferred to Lys.. Functionally, serine protease that cleaves extracellular substrates, and contributes to the proteolytic processing of growth factors, such as HGF and MST1/HGFL. Plays a role in cell growth and maintenance of cell morphology. Plays a role in the proteolytic processing of ACE2. Mediates the proteolytic cleavage of urinary UMOD that is required for UMOD polymerization. This Rattus norvegicus (Rat) protein is Serine protease hepsin (Hpn).